The sequence spans 118 residues: Non-specific lipid-transfer protein D (118 aa).

The first 25 residues, 1-25, serve as a signal peptide directing secretion; sequence MAGLMKLACLIFACMIVAGPITSNA. Cystine bridges form between Cys-29–Cys-77, Cys-39–Cys-54, Cys-55–Cys-100, and Cys-75–Cys-114.

The protein belongs to the plant LTP family.

Functionally, plant non-specific lipid-transfer proteins transfer phospholipids as well as galactolipids across membranes. May play a role in wax or cutin deposition in the cell walls of expanding epidermal cells and certain secretory tissues. In Brassica oleracea var. italica (Broccoli), this protein is Non-specific lipid-transfer protein D (WAX9D).